We begin with the raw amino-acid sequence, 160 residues long: Transcriptional repressor NrdR (160 aa).

The segment at 3–34 (CPRCHHNNSRVIDSRQADDGRAIRRRRECENC) is a zinc-finger region. Residues 49–139 (LLVIKKNGDR…VYRQFKDMSV (91 aa)) form the ATP-cone domain.

Belongs to the NrdR family. Zn(2+) is required as a cofactor.

Functionally, negatively regulates transcription of bacterial ribonucleotide reductase nrd genes and operons by binding to NrdR-boxes. In Enterococcus faecalis (strain ATCC 700802 / V583), this protein is Transcriptional repressor NrdR.